The chain runs to 167 residues: NADH-ubiquinone oxidoreductase chain 6 (167 aa).

The next 5 membrane-spanning stretches (helical) occupy residues 1 to 21 (MKMM…VAFA), 27 to 47 (VYGG…VVSL), 50 to 70 (VFLG…VFGY), 88 to 108 (VALS…LMSG), and 143 to 163 (WALV…LEVV).

This sequence belongs to the complex I subunit 6 family. As to quaternary structure, core subunit of respiratory chain NADH dehydrogenase (Complex I) which is composed of 45 different subunits.

It is found in the mitochondrion inner membrane. It catalyses the reaction a ubiquinone + NADH + 5 H(+)(in) = a ubiquinol + NAD(+) + 4 H(+)(out). In terms of biological role, core subunit of the mitochondrial membrane respiratory chain NADH dehydrogenase (Complex I) which catalyzes electron transfer from NADH through the respiratory chain, using ubiquinone as an electron acceptor. Essential for the catalytic activity and assembly of complex I. In Osphranter robustus (Wallaroo), this protein is NADH-ubiquinone oxidoreductase chain 6 (MT-ND6).